We begin with the raw amino-acid sequence, 360 residues long: MSFFRCIGRSALFMLDPEHAHRLAIVGLKSGLNGCQKVVDKRLSVTIAGLKFKNFIGLAAGFDKNAEVVDEIFRLGFGFTEIGTVTPKPQIGNPKPRLFRLKEDEAIINRMGFNNDGHQVVDDRLRICKKAGVVGVNIGANKDTVDKIDDYTVGIAHFYDVADYFTVNISSPNTPGLRDLQARDSLHLLLNAISKARKEQEKKHGFSIPIFLKIAPDLSEKELDDIAEEIKLSDFDGLIVSNTTLSRQGLNNSHFSNEEGGLSGRPLFERSTIVLAKMRQKLGKEIAIIGVGGVKDAQTALEKVKAGADLIQLYSGMVYEGPNLVITILKEILQMMQQDGVDNIKDYRDHNLEHWAKFPL.

FMN contacts are provided by residues 60-64 and Thr84; that span reads AGFDK. A substrate-binding site is contributed by Lys64. 109 to 113 contacts substrate; that stretch reads NRMGF. Asn137 and Asn168 together coordinate FMN. Residue Asn168 coordinates substrate. Residue Ser171 is the Nucleophile of the active site. Asn173 lines the substrate pocket. 2 residues coordinate FMN: Lys213 and Ser241. 242 to 243 contributes to the substrate binding site; that stretch reads NT. FMN contacts are provided by residues Gly264, Gly293, and 314 to 315; that span reads YS.

The protein belongs to the dihydroorotate dehydrogenase family. Type 2 subfamily. Monomer. FMN is required as a cofactor.

It localises to the cell membrane. The enzyme catalyses (S)-dihydroorotate + a quinone = orotate + a quinol. It participates in pyrimidine metabolism; UMP biosynthesis via de novo pathway; orotate from (S)-dihydroorotate (quinone route): step 1/1. Catalyzes the conversion of dihydroorotate to orotate with quinone as electron acceptor. This chain is Dihydroorotate dehydrogenase (quinone), found in Bartonella tribocorum (strain CIP 105476 / IBS 506).